We begin with the raw amino-acid sequence, 644 residues long: Core protein VP4 (644 aa).

The protein belongs to the orbivirus VP4 family.

The protein resides in the virion. In terms of biological role, the VP4 protein is one of the five proteins (with VP1, VP3, VP6 and VP7) which form the inner capsid of the virus. The polypeptide is Core protein VP4 (Segment-4) (Bluetongue virus 11 (isolate USA) (BTV 11)).